The following is a 71-amino-acid chain: Translation initiation factor IF-1 (71 aa).

In terms of domain architecture, S1-like spans 1-71 (MSKQEMLSFS…LTKGRITFRG (71 aa)).

The protein belongs to the IF-1 family. As to quaternary structure, component of the 30S ribosomal translation pre-initiation complex which assembles on the 30S ribosome in the order IF-2 and IF-3, IF-1 and N-formylmethionyl-tRNA(fMet); mRNA recruitment can occur at any time during PIC assembly.

Its subcellular location is the cytoplasm. In terms of biological role, one of the essential components for the initiation of protein synthesis. Stabilizes the binding of IF-2 and IF-3 on the 30S subunit to which N-formylmethionyl-tRNA(fMet) subsequently binds. Helps modulate mRNA selection, yielding the 30S pre-initiation complex (PIC). Upon addition of the 50S ribosomal subunit IF-1, IF-2 and IF-3 are released leaving the mature 70S translation initiation complex. This chain is Translation initiation factor IF-1, found in Pelagibacter ubique (strain HTCC1062).